The sequence spans 531 residues: Outer dynein arm-docking complex subunit 4 (531 aa).

3 TPR repeats span residues 15-48, 50-82, and 83-116; these read FSTYMAEGEQLYHKAEYKKASDSFTAALQLQPEE, NCLVARSKCFLKLGEPECALKDAEASLQIENDF, and FKGLYQKAEALYAMGDFEFALVHYHRGYKLRPEF. The tract at residues 161–185 is disordered; sequence KQKAQVKVQKKDSKQQKKVDPERSQ. Residues 169-185 show a composition bias toward basic and acidic residues; the sequence is QKKDSKQQKKVDPERSQ. TPR repeat units lie at residues 275–307, 320–353, 360–393, 397–430, and 437–470; these read VKSLEEIDQLLSSGKAEESYKKAQLVLKKVERW, GSLHSCIGNAQMDMGQIEAALQSHKKDLAIAEKY, SRALDNIGRVYARIGKFNEAIKVWEEKIPLANSS, TWLYHEIGRCYLELEQTAEAKEYGEKSQQEADAA, and LNACVLLAQAEVKLKHYQSAISSFENALERARLL. Residues 487 to 531 form a disordered region; it reads KQGMEEQQESEQNNDENDNLRADGNTARDEEEEDVHVQRTEEDEG. Residues 492-503 show a composition bias toward acidic residues; that stretch reads EQQESEQNNDEN. Residues 521 to 531 are compositionally biased toward basic and acidic residues; the sequence is VHVQRTEEDEG.

In terms of assembly, component of the outer dynein arm-docking complex. As to expression, in the mucociliary epithelium, specifically expressed in ciliated cells.

It is found in the cytoplasm. The protein localises to the cytoskeleton. The protein resides in the cilium axoneme. In terms of biological role, component of the outer dynein arm-docking complex (ODA-DC) that mediates outer dynein arms (ODA) binding onto the doublet microtubule. Plays an essential role for the assembly of ODA-DC and in the docking of ODA in ciliary axoneme. Functionally, required for the docking of the outer dynein arm to cilia, hence plays an essential role in cilia motility. The chain is Outer dynein arm-docking complex subunit 4 (odad4) from Xenopus laevis (African clawed frog).